The sequence spans 111 residues: Universal stress protein B (111 aa).

2 helical membrane passes run 1-21 (MISTIALFWALCVVCVVNMAR) and 90-110 (FILTSALCGLVVVSLIALMIW).

The protein belongs to the universal stress protein B family.

The protein resides in the cell inner membrane. The protein is Universal stress protein B of Klebsiella pneumoniae (strain 342).